The chain runs to 166 residues: Ureidoglycolate lyase (166 aa).

It belongs to the ureidoglycolate lyase family. As to quaternary structure, homodimer. It depends on Ni(2+) as a cofactor.

It catalyses the reaction (S)-ureidoglycolate = urea + glyoxylate. It participates in nitrogen metabolism; (S)-allantoin degradation. Catalyzes the catabolism of the allantoin degradation intermediate (S)-ureidoglycolate, generating urea and glyoxylate. Involved in the utilization of allantoin as nitrogen source. The chain is Ureidoglycolate lyase from Rhizobium etli (strain CIAT 652).